The following is a 201-amino-acid chain: 3-isopropylmalate dehydratase small subunit (201 aa).

The protein belongs to the LeuD family. LeuD type 1 subfamily. Heterodimer of LeuC and LeuD.

The enzyme catalyses (2R,3S)-3-isopropylmalate = (2S)-2-isopropylmalate. Its pathway is amino-acid biosynthesis; L-leucine biosynthesis; L-leucine from 3-methyl-2-oxobutanoate: step 2/4. In terms of biological role, catalyzes the isomerization between 2-isopropylmalate and 3-isopropylmalate, via the formation of 2-isopropylmaleate. The polypeptide is 3-isopropylmalate dehydratase small subunit (Escherichia coli O45:K1 (strain S88 / ExPEC)).